The sequence spans 149 residues: Large ribosomal subunit protein bL9 (149 aa).

It belongs to the bacterial ribosomal protein bL9 family.

Functionally, binds to the 23S rRNA. The sequence is that of Large ribosomal subunit protein bL9 from Haemophilus ducreyi (strain 35000HP / ATCC 700724).